We begin with the raw amino-acid sequence, 447 residues long: Probable ribonuclease FAU-1 (447 aa).

A disordered region spans residues 424-447 (PEAPGGKICTPEGLTSAPPRSSSA).

The protein belongs to the FAU-1 family.

Its function is as follows. Probable RNase involved in rRNA stability through maturation and/or degradation of precursor rRNAs. Binds to RNA in loop regions with AU-rich sequences. In Pyrobaculum neutrophilum (strain DSM 2338 / JCM 9278 / NBRC 100436 / V24Sta) (Thermoproteus neutrophilus), this protein is Probable ribonuclease FAU-1.